Consider the following 578-residue polypeptide: MKASRFFIGTLKEAPADAEIVSHKLMVRAGMIRRVAGGIYNYLPVGLRSIRKVEAIVREEMNRAGAIELLMPAVQPAELWQESGRWEQYGPELLRFKDRKQNEFVIGPTHEEVVTDIARNQIKSYRQMPVNFYQIQTKFRDEIRPRFGVMRGREFIMKDAYSFDKDHESLKESYKKMYDAYVRIFTRIGLEFRPVAADNGSIGGSGSHEFHVIADTGEDAIAYCPTSDFAANVEAAEALPLLASRAAPAEAMQKVATPGKAKCEAVAELMGIPLERTIKSIVLATDNEGAEPTIWLLMLRGDHDLNEIKTAKLPGLAGHRFATEAEIVEWFGTPPGYLGPIGTKKPVRVVADRTVANMSDFVVGANEVDYHIAGVNWGRDLPEPVVADIRNVKAGDPSPDGKGALDICRGIEVGHVFQLGTKYSDAMGATFIDESGKAQPMVMGCYGIGITRILGAAIEQNFDDKGIVWPEAIAPFEVVLCPMGYDRSDAVREAADKLYAELAAAGIDVILDDRGERPGVMFADWELIGVPHRLVIGERGLKDGKIEYQGRRDAEATLLPADSAAAAVAEKVRAALAR.

This sequence belongs to the class-II aminoacyl-tRNA synthetase family. ProS type 1 subfamily. Homodimer.

It is found in the cytoplasm. The enzyme catalyses tRNA(Pro) + L-proline + ATP = L-prolyl-tRNA(Pro) + AMP + diphosphate. In terms of biological role, catalyzes the attachment of proline to tRNA(Pro) in a two-step reaction: proline is first activated by ATP to form Pro-AMP and then transferred to the acceptor end of tRNA(Pro). As ProRS can inadvertently accommodate and process non-cognate amino acids such as alanine and cysteine, to avoid such errors it has two additional distinct editing activities against alanine. One activity is designated as 'pretransfer' editing and involves the tRNA(Pro)-independent hydrolysis of activated Ala-AMP. The other activity is designated 'posttransfer' editing and involves deacylation of mischarged Ala-tRNA(Pro). The misacylated Cys-tRNA(Pro) is not edited by ProRS. In Burkholderia pseudomallei (strain 668), this protein is Proline--tRNA ligase.